The primary structure comprises 151 residues: Cytochrome c-type biogenesis protein CcmE (151 aa).

At Met1–Arg8 the chain is on the cytoplasmic side. Residues Leu9 to Ala29 traverse the membrane as a helical; Signal-anchor for type II membrane protein segment. The Periplasmic segment spans residues Leu30 to Gly151. Heme is bound by residues His124 and Tyr128.

The protein belongs to the CcmE/CycJ family.

Its subcellular location is the cell inner membrane. In terms of biological role, heme chaperone required for the biogenesis of c-type cytochromes. Transiently binds heme delivered by CcmC and transfers the heme to apo-cytochromes in a process facilitated by CcmF and CcmH. The sequence is that of Cytochrome c-type biogenesis protein CcmE from Pseudomonas fluorescens (strain SBW25).